A 539-amino-acid polypeptide reads, in one-letter code: MPPAGGPRAPRPAALPRSLSRLRECPGRSRIVLALGATQMALGCLIVAVSFAALALTTSARVRHSCPFWAGFSVLLSGLIGVVSWKRPLSLVITFFMLLSAVCVMLNLAGSILSCQNAQLVNSLEGCQLIKFDSVEVCVCCELQHQSSGCSNLGETLKLNPLQENCNAVRLTLKDLLFSVCALNVLSTIVCALATAMCCMQMVSSDVLQMFLPQRSHPANPTCVTPHGTVLHQTLDFDEFIPPLPPPPYYPPEYTCTPSTEAQRGLHLDFAPSPFGTLYDVAINSPGLLYPAELPPPYEAVVGQPPASQVTSIGQQVAESSSGDPNTSAGFSTPVPADSTSLLVSEGTATPGSSPSPDGPVGAPAPSEPALPPGHVSPEDPGMGSQVQPGPGRVSRSTSDPTLCTSSMAGDASSHRPSCSQDLEAGLSEAVPGSASMSRSATAACRAQLSPAGDPDTWKTDQRPTPEPFPATSKERPRSLVDSKAYADARVLVAKFLEHSHCALPTEAQHMVGAMRLAVTNEERLEEEAVFGADVLDQV.

The next 4 helical transmembrane spans lie at 31–51, 65–85, 89–109, and 176–196; these read IVLA…AVSF, SCPF…VVSW, LSLV…LNLA, and LLFS…LATA. The disordered stretch occupies residues 301–481; that stretch reads VVGQPPASQV…TSKERPRSLV (181 aa). Polar residues predominate over residues 306 to 331; the sequence is PASQVTSIGQQVAESSSGDPNTSAGF. Residues 347–365 are compositionally biased toward low complexity; that stretch reads GTATPGSSPSPDGPVGAPA. Residues 395 to 408 show a composition bias toward polar residues; sequence SRSTSDPTLCTSSM.

This sequence belongs to the ENTREP family.

It is found in the membrane. The chain is Protein ENTREP2 from Homo sapiens (Human).